The sequence spans 71 residues: Disintegrin halysin (71 aa).

Residues 1–71 (EAGEECDCGS…ISAGCPRNPF (71 aa)) enclose the Disintegrin domain. Cystine bridges form between Cys6/Cys21, Cys8/Cys16, Cys15/Cys38, Cys29/Cys35, Cys34/Cys59, and Cys47/Cys66. Residues 51–53 (RGD) carry the Cell attachment site motif.

It belongs to the venom metalloproteinase (M12B) family. P-II subfamily. P-IIa sub-subfamily. In terms of assembly, monomer. As to expression, expressed by the venom gland.

It is found in the secreted. In terms of biological role, inhibits fibrinogen interaction with platelets. Acts by binding to alpha-IIb/beta-3 (ITGA2B/ITGB3) on the platelet surface and inhibits aggregation induced by ADP, thrombin, platelet-activating factor and collagen. This chain is Disintegrin halysin, found in Gloydius blomhoffii (Mamushi).